Consider the following 255-residue polypeptide: Electron transfer flavoprotein subunit beta (255 aa).

N-acetylalanine is present on A2. AMP-binding positions include A9, 39–42 (NPFC), C66, and 123–134 (GKQAIDDDCNQT). The segment at 183-205 (ADLRLNEPRYATLPNIMKAKKKK) is recognition loop. K200 carries the N6,N6,N6-trimethyllysine; by ETFBKMT; alternate modification. At K200 the chain carries N6-acetyllysine; alternate. Residue K200 is modified to N6-methyllysine; alternate. K203 bears the N6,N6,N6-trimethyllysine; by ETFBKMT mark. An N6-acetyllysine; alternate modification is found at K210. Position 210 is an N6-succinyllysine; alternate (K210). S223 and S226 each carry phosphoserine. K238 bears the N6-acetyllysine mark. An N6-acetyllysine; alternate modification is found at K248. Residue K248 is modified to N6-succinyllysine; alternate.

This sequence belongs to the ETF beta-subunit/FixA family. In terms of assembly, heterodimer composed of ETFA and ETFB. Identified in a complex that contains ETFA, ETFB and ETFRF1. Interacts with ACADM. In terms of processing, methylated. Trimethylation at Lys-200 and Lys-203 may negatively regulate the activity in electron transfer from acyl-CoA dehydrogenases.

It is found in the mitochondrion matrix. Its function is as follows. Heterodimeric electron transfer flavoprotein that accepts electrons from several mitochondrial dehydrogenases, including acyl-CoA dehydrogenases, glutaryl-CoA and sarcosine dehydrogenase. It transfers the electrons to the main mitochondrial respiratory chain via ETF-ubiquinone oxidoreductase. Required for normal mitochondrial fatty acid oxidation and normal amino acid metabolism. ETFB binds an AMP molecule that probably has a purely structural role. The polypeptide is Electron transfer flavoprotein subunit beta (Sus scrofa (Pig)).